The primary structure comprises 300 residues: Ribosomal protein bS6--L-glutamate ligase (300 aa).

Residues 104-287 (LQLLARQGID…IAGRMIQWIE (184 aa)) enclose the ATP-grasp domain. ATP is bound by residues Lys141, 178 to 179 (EY), Asp187, and 211 to 213 (RSN). Mg(2+) contacts are provided by Asp248, Glu260, and Asn262. Mn(2+) contacts are provided by Asp248, Glu260, and Asn262.

Belongs to the RimK family. It depends on Mg(2+) as a cofactor. Mn(2+) serves as cofactor.

Functionally, an L-glutamate ligase that catalyzes the ATP-dependent post-translational addition of glutamate residues to the C-terminus of ribosomal protein bS6 (RpsF). Is also able to catalyze the synthesis of poly-alpha-glutamate in vitro, via ATP hydrolysis from unprotected glutamate as substrate. The number of glutamate residues added to either RpsF or to poly-alpha-glutamate changes with pH. The polypeptide is Ribosomal protein bS6--L-glutamate ligase (Salmonella agona (strain SL483)).